The primary structure comprises 248 residues: METTIHNLNGDKADTLELPAVFETPYRPDVIERAVVAAQANRKQPYGADPYAGMRTPAESFGSGRGMAHVPRENGQARRVPQAVSGRKAHPPKAEKDQSKSVNTKERKLAFQSAVAATADPSQVEERGHQFENDVELPLVVSDEFEELIKTQEVVDVLESLGVHADIVRSDENKSIRAGRGKTRGRKYRRPKSILFITSDEPSKAARNLAGADVVTAANVSAEDLAPGTQPGRLTVYTESAIKEVADR.

A disordered region spans residues 45 to 105 (PYGADPYAGM…KDQSKSVNTK (61 aa)). Positions 92–105 (PKAEKDQSKSVNTK) are enriched in basic and acidic residues.

The protein belongs to the universal ribosomal protein uL4 family. In terms of assembly, part of the 50S ribosomal subunit.

Its function is as follows. One of the primary rRNA binding proteins, this protein initially binds near the 5'-end of the 23S rRNA. It is important during the early stages of 50S assembly. It makes multiple contacts with different domains of the 23S rRNA in the assembled 50S subunit and ribosome. Forms part of the polypeptide exit tunnel. The sequence is that of Large ribosomal subunit protein uL4 from Haloquadratum walsbyi (strain DSM 16790 / HBSQ001).